The sequence spans 796 residues: Protein translocase subunit SecA 2 (796 aa).

ATP is bound by residues Gln84, 102–106, and Asp496; that span reads GEGKT.

Belongs to the SecA family. In terms of assembly, monomer and homodimer. Part of the essential Sec protein translocation apparatus which comprises SecA, SecYEG and auxiliary proteins SecDF. Other proteins may also be involved.

Its subcellular location is the cell membrane. The protein localises to the cytoplasm. The catalysed reaction is ATP + H2O + cellular proteinSide 1 = ADP + phosphate + cellular proteinSide 2.. Functionally, part of the Sec protein translocase complex. Interacts with the SecYEG preprotein conducting channel. Has a central role in coupling the hydrolysis of ATP to the transfer of proteins into and across the cell membrane, serving as an ATP-driven molecular motor driving the stepwise translocation of polypeptide chains across the membrane. The sequence is that of Protein translocase subunit SecA 2 from Staphylococcus aureus (strain Mu3 / ATCC 700698).